The following is a 179-amino-acid chain: MTIMNGFELHYLSFVYAQEFSSKNNNLGGQMKHIIALASKIAFTLALLYVILDRVYHASFLSVMFIALFLGFVSYLSGDMLVLPRTNNITASLADFGLSFVILWVFVLTQTRNDFSPFGAALLSAACLTVFEYFFHRYLLKNVLDENFRNELSARDNTLQYQTEAADELFPETKEKHKE.

A run of 4 helical transmembrane segments spans residues 33–53 (HIIA…VILD), 63–83 (VMFI…MLVL), 89–109 (ITAS…FVLT), and 115–135 (FSPF…EYFF).

Its subcellular location is the cell membrane. This is an uncharacterized protein from Bacillus subtilis (strain 168).